The primary structure comprises 259 residues: Ras-related protein Rab-34 (259 aa).

Residue M1 is modified to N-acetylmethionine. Positions 62, 63, 64, 65, 66, 78, 81, and 84 each coordinate GTP. T66 contacts Mg(2+). Positions 71–89 (RFCKDTFDKNYKATIGVDF) match the Switch 1 motif. 2 residues coordinate Mg(2+): T84 and D107. Positions 108 to 127 (TAGQERFKCIASTYYRGAQA) match the Switch 2 motif. 4 residues coordinate GTP: G110, K167, D169, and S198. S241 and S244 each carry phosphoserine. 2 S-geranylgeranyl cysteine lipidation sites follow: C257 and C258.

Belongs to the small GTPase superfamily. Rab family. Interacts with RILP. The GTP-bound form interacts with REP15. Requires Mg(2+) as cofactor.

The protein localises to the cytoplasm. It is found in the golgi apparatus. It localises to the cytoplasmic vesicle. Its subcellular location is the phagosome. The protein resides in the phagosome membrane. The protein localises to the cell projection. It is found in the cilium. It localises to the cytoskeleton. Its subcellular location is the microtubule organizing center. The protein resides in the centrosome. The protein localises to the centriole. It carries out the reaction GTP + H2O = GDP + phosphate + H(+). With respect to regulation, regulated by guanine nucleotide exchange factors (GEFs) which promote the exchange of bound GDP for free GTP. Regulated by GTPase activating proteins (GAPs) which increase the GTP hydrolysis activity. Inhibited by GDP dissociation inhibitors (GDIs). The small GTPases Rab are key regulators of intracellular membrane trafficking, from the formation of transport vesicles to their fusion with membranes. Rabs cycle between an inactive GDP-bound form and an active GTP-bound form that is able to recruit to membranes different sets of downstream effectors directly responsible for vesicle formation, movement, tethering and fusion. RAB34 transports protein involved in the redistribution of lysosomes to the peri-Golgi region. Plays a role in the maturation of phagosomes that engulf pathogens, such as S.aureus and M.tuberculosis. Plays a role in the fusion of phagosomes with lysosomes. Involved in ciliogenesis. In particular, it is required for early steps of the intracellular cilium assembly pathway initiated by trafficking and docking of ciliary vesicles to the centrioles in the cytoplasm, followed by axoneme formation in the cytoplasm. After axoneme elongation, the centrioles migrate close to the cell surface so that ciliary vesicles can fuse with the plasma membrane to expose cilia to the extracellular space. It seems dispensable for ciliogenesis via the extracellular pathway where cilium assembly begins after migration and docking of the centriole to the plasma membrane. Also acts as a positive regulator of hedgehog signaling and regulates ciliary function. The protein is Ras-related protein Rab-34 of Homo sapiens (Human).